A 245-amino-acid polypeptide reads, in one-letter code: NAD(P)H-hydrate epimerase (245 aa).

In terms of domain architecture, YjeF N-terminal spans 16–224; that stretch reads AAALDAELMA…HIADKYDLEV (209 aa). Residue 68-72 coordinates (6S)-NADPHX; that stretch reads NNGGD. Positions 69 and 131 each coordinate K(+). (6S)-NADPHX contacts are provided by residues 135–141 and Asp-164; that span reads GFSFKPP. Residue Ser-167 coordinates K(+).

It belongs to the NnrE/AIBP family. K(+) serves as cofactor.

It is found in the cytoplasm. Its subcellular location is the mitochondrion. It carries out the reaction (6R)-NADHX = (6S)-NADHX. The enzyme catalyses (6R)-NADPHX = (6S)-NADPHX. Catalyzes the epimerization of the S- and R-forms of NAD(P)HX, a damaged form of NAD(P)H that is a result of enzymatic or heat-dependent hydration. This is a prerequisite for the S-specific NAD(P)H-hydrate dehydratase to allow the repair of both epimers of NAD(P)HX. The sequence is that of NAD(P)H-hydrate epimerase from Yarrowia lipolytica (strain CLIB 122 / E 150) (Yeast).